We begin with the raw amino-acid sequence, 314 residues long: Olfactory receptor 5P67 (314 aa).

Over 1–28 (MAFLEDGNHTAVTEFILLGLTDDPVLRV) the chain is Extracellular. An N-linked (GlcNAc...) asparagine glycan is attached at asparagine 8. Residues 29–49 (ILFTIILCIYLVTVSGNLSTI) traverse the membrane as a helical segment. Topologically, residues 50-57 (LLIRVSSQ) are cytoplasmic. A helical membrane pass occupies residues 58–78 (LHHPMYFFLSHVGSVDIGYSS). Over 79–102 (SVTPNMLVNFLVEKHTIAYLGCGI) the chain is Extracellular. Cysteine 100 and cysteine 192 are joined by a disulfide. A helical transmembrane segment spans residues 103–123 (QLSSAAFFGTAECFLLATMAY). The Cytoplasmic segment spans residues 124–136 (DRFVAICNPLLYS). A helical membrane pass occupies residues 137–157 (TKMSTQTCIQLVVGSYTGGIL). Over 158–199 (NASFAIISFFSFLFCGPNRINHFYCDFAPLVELSCSDINVSV) the chain is Extracellular. The chain crosses the membrane as a helical span at residues 200–220 (VITTIFSASVTIITVFVIAIS). Residues 221 to 240 (YTYILITILKMRSTEGRHKA) are Cytoplasmic-facing. A helical transmembrane segment spans residues 241-261 (FSTCTSYLTAVTLFYGTVTFI). Topologically, residues 262-274 (YVVPKSNYSTDQN) are extracellular. Residue asparagine 268 is glycosylated (N-linked (GlcNAc...) asparagine). The helical transmembrane segment at 275–295 (KVASVFYIVVIPMLNPLIYSL) threads the bilayer. The Cytoplasmic segment spans residues 296 to 314 (RNNDIKGALKRQLGKKTFS).

It belongs to the G-protein coupled receptor 1 family.

Its subcellular location is the cell membrane. Potential odorant receptor. This is Olfactory receptor 5P67 from Mus musculus (Mouse).